The following is a 154-amino-acid chain: MDPDDDLVLENEAEEIERLQLPEELKKPIDPEEEDERVARIEFNCSGCEMHEMVHYFGRKPPFALGVIYPEDNYVMRDPFQPPPPRWQSKPEYYIAMGTKCSICSKTVCKDPGCSFYYTASFCLPCGKEELKNWPPEAQARIRKQMSVSQGRQT.

This sequence belongs to the CDPF1 family.

This Drosophila melanogaster (Fruit fly) protein is Cysteine-rich DPF motif domain-containing protein 1.